The chain runs to 457 residues: UDP-glucosyltransferase 45 (457 aa).

H21 acts as the Proton acceptor in catalysis. Residue H21 coordinates an anthocyanidin. D112 acts as the Charge relay in catalysis. UDP-alpha-D-glucose-binding residues include T134, Q336, H351, W354, N355, S356, E359, D375, and Q376.

It belongs to the UDP-glycosyltransferase family.

It catalyses the reaction (20S)-protopanaxadiol + UDP-alpha-D-glucose = (20S)-ginsenoside Rh2 + UDP + H(+). It participates in secondary metabolite biosynthesis; terpenoid biosynthesis. Functionally, component of the triterpene saponins (e.g. PPD-type ginsenosides) biosynthetic pathway. Glycosyltransferase that catalyzes the biosynthesis of ginsenoside Rh2 from protopanaxadiol (PPD). This Panax ginseng (Korean ginseng) protein is UDP-glucosyltransferase 45.